A 162-amino-acid polypeptide reads, in one-letter code: MTVSSEEISGILDGVLSLPVKLYSLKVNQRPNHSLIEVVLDNLEHPYGSVSLLECEQVSRKLKEELERISPDLDYTLKVSSAGAERKLNLPGDLDRFRGIPIRLVFRSEESEKEQEGIFRVVNRDGDQIVLEKFQKGKKSVVKKQTTLNLKDILKGNLYVNI.

This sequence belongs to the RimP family.

Its subcellular location is the cytoplasm. Functionally, required for maturation of 30S ribosomal subunits. The sequence is that of Ribosome maturation factor RimP from Leptospira interrogans serogroup Icterohaemorrhagiae serovar copenhageni (strain Fiocruz L1-130).